We begin with the raw amino-acid sequence, 615 residues long: DNA mismatch repair protein MutL (615 aa).

The protein belongs to the DNA mismatch repair MutL/HexB family.

Its function is as follows. This protein is involved in the repair of mismatches in DNA. It is required for dam-dependent methyl-directed DNA mismatch repair. May act as a 'molecular matchmaker', a protein that promotes the formation of a stable complex between two or more DNA-binding proteins in an ATP-dependent manner without itself being part of a final effector complex. The chain is DNA mismatch repair protein MutL from Histophilus somni (strain 2336) (Haemophilus somnus).